Here is a 573-residue protein sequence, read N- to C-terminus: N(2)-(2-carboxyethyl)arginine synthase (573 aa).

Residues Y271 and D301 each contribute to the substrate site. Position 410–413 (410–413 (IGFF)) interacts with thiamine diphosphate. 414–415 (RH) lines the substrate pocket. Residue 436–438 (SSF) participates in thiamine diphosphate binding. D463 lines the Mg(2+) pocket. Thiamine diphosphate-binding positions include 464 to 465 (GG), 490 to 495 (NDTNGL), and Y561. Positions 490 and 492 each coordinate Mg(2+). A substrate-binding site is contributed by L571.

Homotetramer; dimer of dimers. It depends on Mg(2+) as a cofactor. Thiamine diphosphate serves as cofactor.

It carries out the reaction D-glyceraldehyde 3-phosphate + L-arginine = N(2)-(2-carboxyethyl)-L-arginine + phosphate + H(+). Its function is as follows. Involved in the biosynthesis of the beta-lactamase inhibitor, clavulanic acid. Catalyzes the thiamine diphosphate (ThDP) dependent condensation of D-glyceraldehyde-3-phosphate (D-G3P) with L-arginine to yield the beta-amino acid, N2-(2-carboxyethyl)arginine (CEA) via a beta-elimination resulting in the formation of an enol which undergoes a second elimination to generate the alpha,beta-unsaturated acryloyl-ThDP. The sequence is that of N(2)-(2-carboxyethyl)arginine synthase from Streptomyces clavuligerus.